A 239-amino-acid polypeptide reads, in one-letter code: Non-structural protein V (239 aa).

Disordered regions lie at residues 30-104 (PVET…ADEA) and 126-180 (NKSS…HRRE). Over residues 65-74 (TPDRQDRSDK) the composition is skewed to basic and acidic residues. Composition is skewed to polar residues over residues 89–98 (PATSTDQPPT) and 143–153 (ASSTSDSTAGE). Zn(2+)-binding residues include His177, Cys196, Cys200, Cys212, Cys214, Cys217, Cys221, and Cys224.

Interacts with host STAT1. Interacts with host TXNL1. Interacts (via C-terminus) with host CacyBP; this interaction inhibits host cell apoptosis.

It is found in the host cytoplasm. The protein localises to the host nucleus. Its function is as follows. Protects the virus against cell antiviral state by blocking host interferon signaling. Mechanistically, targets host phosphorylated STAT1 (phospho-STAT1) for degradation, thereby inhibiting the interferon alpha signaling pathway. Plays a role in the inhibition of host apoptosis. Interacts with and down-regulates the expression of host TXNL1. In turn, inhibits TXNL1-induced apoptosis through the BCL2-BAX-caspase 3 pathway. Inhibits host apoptosis also by negatively regulating host CacyBP/SIP. Promotes viral replication by activating the extracellular signal-regulated kinase (ERK) pathway. This is Non-structural protein V (P/V) from Gallus gallus (Chicken).